A 265-amino-acid chain; its full sequence is Short-chain dehydrogenase/reductase phqE (265 aa).

NADP(+) contacts are provided by Thr-23, Ser-24, Ile-26, Ser-46, Asn-47, Lys-50, Asp-76, Arg-131, Val-203, and Thr-205. The chain crosses the membrane as a helical span at residues 25 to 45 (GIGFAVCAAALGHGAIVTIVG).

This sequence belongs to the short-chain dehydrogenases/reductases (SDR) family. NADP(+) serves as cofactor.

Its subcellular location is the membrane. It functions in the pathway alkaloid biosynthesis. Functionally, short-chain dehydrogenase/reductase; part of the gene cluster that mediates the biosynthesis of paraherquamide, a fungal indole alkaloid that belongs to a family of natural products containing a characteristic bicyclo[2.2.2]diazaoctane core. The first steps in the biosynthesis of paraherquamide is the production of the beta-methyl-proline precursor from L-isoleucine. They require oxidation of a terminally hydroxylated L-isoleucine to the corresponding aldehyde by enzymes which have still to be identified. Spontaneous cyclization and dehydration would yield the 4-methyl pyrolline-5-carboxylic acid, which is then reduced by the pyrroline-5-carboxylate reductase phqD leading to the beta-methyl-proline precursor. The next step of paraherquamide biosynthesis involves coupling of beta-methyl-proline and L-tryptophan by the bimodular NRPS phqB, to produce a monooxopiperazine intermediate. The reductase (R) domain of phqB utilizes NADPH for hydride transfer to reduce the thioester bond of the T domain-tethered linear dipeptide to a hemithioaminal intermediate, which spontaneously cleaves the C-S bond to release the aldehyde product. This compound undergoes spontaneous cyclization and dehydration to give a dienamine which is reverse prenylated at C-2 by the reverse prenyltransferase phqJ. The other prenyltransferase present in the cluster, phqI may be a redundant gene in the pathway. During biosynthetic assembly, the key step to produce the polycyclic core is catalyzed by the bifunctional reductase and intramolecular [4+2] Diels-Alderase, phqE, resulting in formation of the [2.2.2] diazaoctane intermediate preparaherquamide. Following formation of preparaherquamide, an indole 2,3-epoxidation-initiated pinacol-like rearrangement is catalyzed by the phqK FAD-dependent monooxygenase. The prenyltransferase phqA, the cytochrome P450 monooxygenase phqL, and the FAD-linked oxidoreductase phqH (or the cytochrome P450 monooxygenase phqM), are proposed to be involved in the formation of the pyran ring. The FAD-dependent monooxygenase phqK is likely responsible for generation of the spiro-oxindole, and the N-methylation is likely mediated by the phqN methyltransferase leading to the isolable natural product paraherquamide F. However, the order of these biosynthetic steps has still to be determined. In late-stage paraherquamide biosynthesis, the third P450 monooxygenase, phqO, is probably responsible for the C-14 hydroxylation, transforming paraherquamide F to paraherquamide G, and paraherquamide E to the final product paraherquamide A. The expansion from the 6-membered ring pyran (in paraherquamides F and G) to the 7-membered dioxepin ring (in paraherquamides A and E) represents a poorly understood but intriguing process that probably involves the 2-oxoglutarate-dependent dioxygenase phqC. Finally, the remaining members of the paraherquamide cluster, including phqI as well as phqM (or phqH), do not have a clearly prescribed role and appear to be redundant. The chain is Short-chain dehydrogenase/reductase phqE from Penicillium fellutanum.